A 348-amino-acid polypeptide reads, in one-letter code: Delta(6)-protoilludene synthase 18 (348 aa).

Residues Asp87, Asn223, Ser227, and Glu231 each contribute to the Mg(2+) site. Positions 87–91 (DEYTD) match the DDXXD motif motif. The NSE/DTE motif motif lies at 223 to 231 (NDLVSYNRE). Residues Arg311 and Tyr312 each contribute to the (2E,6E)-farnesyl diphosphate site.

Belongs to the terpene synthase family. Requires Mg(2+) as cofactor.

It carries out the reaction (2E,6E)-farnesyl diphosphate = Delta(6)-protoilludene + diphosphate. Functionally, terpene cyclase that catalyzes the cyclization of farnesyl diphosphate (FPP) to delta(6)-protoilludene. The protein is Delta(6)-protoilludene synthase 18 of Postia placenta (strain ATCC 44394 / Madison 698-R) (Brown rot fungus).